The sequence spans 337 residues: UPF0252 protein PH1321 (337 aa).

A helical membrane pass occupies residues 100–120 (IIGMLFLVFIILPAITSNLWS).

The protein belongs to the UPF0252 family.

It localises to the membrane. The chain is UPF0252 protein PH1321 from Pyrococcus horikoshii (strain ATCC 700860 / DSM 12428 / JCM 9974 / NBRC 100139 / OT-3).